A 123-amino-acid chain; its full sequence is Small ribosomal subunit protein uS12 (123 aa).

Residues 1-21 (MPTIEQLVRKGRQAKPKKSKT) are disordered. Positions 9–20 (RKGRQAKPKKSK) are enriched in basic residues.

Belongs to the universal ribosomal protein uS12 family. In terms of assembly, part of the 30S ribosomal subunit. Contacts proteins S8 and S17. May interact with IF1 in the 30S initiation complex.

With S4 and S5 plays an important role in translational accuracy. Functionally, interacts with and stabilizes bases of the 16S rRNA that are involved in tRNA selection in the A site and with the mRNA backbone. Located at the interface of the 30S and 50S subunits, it traverses the body of the 30S subunit contacting proteins on the other side and probably holding the rRNA structure together. The combined cluster of proteins S8, S12 and S17 appears to hold together the shoulder and platform of the 30S subunit. The sequence is that of Small ribosomal subunit protein uS12 from Bifidobacterium longum (strain NCC 2705).